Consider the following 842-residue polypeptide: Protein P (842 aa).

The terminal protein domain (TP) stretch occupies residues 1–177; the sequence is MPLSYQHFRR…FCGSPYTWEQ (177 aa). The spacer stretch occupies residues 178–345; that stretch reads DLQHGAFLDG…YCLSHLVNLL (168 aa). The disordered stretch occupies residues 184-238; the sequence is FLDGPSRVGKEPFHQQSSRIPSRSPVGPSIQSKYQQSRLGLQSQKGPLARGQQGR. The span at 212–228 shows a compositional bias: polar residues; it reads SIQSKYQQSRLGLQSQK. Residues 346 to 689 form a polymerase/reverse transcriptase domain (RT) region; it reads QDWGPCTEHG…YMNLYPVARQ (344 aa). The region spanning 356–599 is the Reverse transcriptase domain; it reads EYHIRIPRTP…YSLNFMGYVI (244 aa). The Mg(2+) site is built by Asp428, Asp550, and Asp551.

The protein belongs to the hepadnaviridae P protein family.

The enzyme catalyses DNA(n) + a 2'-deoxyribonucleoside 5'-triphosphate = DNA(n+1) + diphosphate. The catalysed reaction is Endonucleolytic cleavage to 5'-phosphomonoester.. Its activity is regulated as follows. Activated by host HSP70 and HSP40 in vitro to be able to bind the epsilon loop of the pgRNA. Because deletion of the RNase H region renders the protein partly chaperone-independent, the chaperones may be needed indirectly to relieve occlusion of the RNA-binding site by this domain. Inhibited by several reverse-transcriptase inhibitors: Lamivudine, Adefovir and Entecavir. Multifunctional enzyme that converts the viral RNA genome into dsDNA in viral cytoplasmic capsids. This enzyme displays a DNA polymerase activity that can copy either DNA or RNA templates, and a ribonuclease H (RNase H) activity that cleaves the RNA strand of RNA-DNA heteroduplexes in a partially processive 3'- to 5'-endonucleasic mode. Neo-synthesized pregenomic RNA (pgRNA) are encapsidated together with the P protein, and reverse-transcribed inside the nucleocapsid. Initiation of reverse-transcription occurs first by binding the epsilon loop on the pgRNA genome, and is initiated by protein priming, thereby the 5'-end of (-)DNA is covalently linked to P protein. Partial (+)DNA is synthesized from the (-)DNA template and generates the relaxed circular DNA (RC-DNA) genome. After budding and infection, the RC-DNA migrates in the nucleus, and is converted into a plasmid-like covalently closed circular DNA (cccDNA). The activity of P protein does not seem to be necessary for cccDNA generation, and is presumably released from (+)DNA by host nuclear DNA repair machinery. The protein is Protein P of Hepatitis B virus genotype G (isolate United States/USG17/2002) (HBV-G).